Reading from the N-terminus, the 821-residue chain is Epidermal growth factor receptor kinase substrate 8 (821 aa).

2 stretches are compositionally biased toward polar residues: residues 1-10 (MNGHMSNRSS) and 17-28 (SQLNGYGSSPPY). The disordered stretch occupies residues 1–39 (MNGHMSNRSSGYGVYPSQLNGYGSSPPYSQMDREHSSRT). S58 carries the post-translational modification Phosphoserine. The PTB domain occupies 64–194 (QYRVEHLTTF…SDSKGGKQKR (131 aa)). Disordered stretches follow at residues 204–224 (KADP…PGTV), 295–320 (SELS…TLRA), and 461–525 (ANAE…RNYD). Residues 208–221 (GIPPPPRAPAPVPP) show a composition bias toward pro residues. Residue T223 is modified to Phosphothreonine. Over residues 299-309 (KRKKSKKSKRK) the composition is skewed to basic residues. Phosphothreonine is present on T317. Over residues 464-476 (EHQRKQDSKRLST) the composition is skewed to basic and acidic residues. The residue at position 475 (S475) is a Phosphoserine. In terms of domain architecture, SH3 spans 530–589 (QPKKYAKSKYDFVARNSSELSVMKDDVLEILDDRRQWWKVRNASGDSGFVPNNILDIMRT). Residues 610-683 (TEYGLRSADT…YKQLPVDRRK (74 aa)) are disordered. A compositionally biased stretch (pro residues) spans 622-641 (APSPPPTPAPVPVPLPPSVP). The residue at position 624 (S624) is a Phosphoserine; by MAPK. Position 628 is a phosphothreonine; by MAPK (T628). Residues 642-651 (APVSVPKVPA) show a composition bias toward low complexity. The interval 648–821 (KVPANVTRQN…VESFDEGSSH (174 aa)) is effector region. 2 positions are modified to phosphoserine: S658 and S661. Residues 670–683 (DSQRYKQLPVDRRK) are compositionally biased toward basic and acidic residues. The interval 679-697 (VDRRKSQMEEVQDELFQRL) is amphipathic helix. Position 684 is a phosphoserine (S684). 4 helix bundle regions span residues 717 to 737 (VINI…QSKG), 751 to 756 (GAQLFS), 761 to 766 (ELRSVC), and 765 to 784 (VCPE…AALE). A disordered region spans residues 800 to 821 (QEKISAAASDSGVESFDEGSSH). S810 and S814 each carry phosphoserine.

The protein belongs to the EPS8 family. Homodimer. Part of a complex consisting of ABI1, EPS8 and SOS1. Interacts with BAIAP2. Interacts with SHB and LANCL1. Interacts with EGFR; mediates EPS8 phosphorylation. Interacts with MYO15A and WHRN. Ubiquitinated by the SCF(FBXW5) E3 ubiquitin-protein ligase complex during G2 phase, leading to its transient degradation and subsequent cell shape changes required to allow mitotic progression. Reappears at the midzone of dividing cells. Post-translationally, phosphorylation at Ser-624 and Thr-628 by MAPK following BDNF treatment promotes removal from actin and filopodia formation. Phosphorylated by several receptor tyrosine kinases. As to expression, expressed in neuronal cell body and neurites, and prominently enriched in the axonal growth cone. Expressed at the tips of cochlear hair cells stereocilia.

Its subcellular location is the cytoplasm. It is found in the cell cortex. It localises to the cell projection. The protein resides in the ruffle membrane. The protein localises to the growth cone. Its subcellular location is the stereocilium. It is found in the synapse. It localises to the synaptosome. Its function is as follows. Signaling adapter that controls various cellular protrusions by regulating actin cytoskeleton dynamics and architecture. Depending on its association with other signal transducers, can regulate different processes. Together with SOS1 and ABI1, forms a trimeric complex that participates in transduction of signals from Ras to Rac by activating the Rac-specific guanine nucleotide exchange factor (GEF) activity. Acts as a direct regulator of actin dynamics by binding actin filaments and has both barbed-end actin filament capping and actin bundling activities depending on the context. Displays barbed-end actin capping activity when associated with ABI1, thereby regulating actin-based motility process: capping activity is auto-inhibited and inhibition is relieved upon ABI1 interaction. Also shows actin bundling activity when associated with BAIAP2, enhancing BAIAP2-dependent membrane extensions and promoting filopodial protrusions. Involved in the regulation of processes such as axonal filopodia growth, stereocilia length, dendritic cell migration and cancer cell migration and invasion. Acts as a regulator of axonal filopodia formation in neurons: in the absence of neurotrophic factors, negatively regulates axonal filopodia formation via actin-capping activity. In contrast, it is phosphorylated in the presence of BDNF leading to inhibition of its actin-capping activity and stimulation of filopodia formation. Component of a complex with WHRN and MYO15A that localizes at stereocilia tips and is required for elongation of the stereocilia actin core. Indirectly involved in cell cycle progression; its degradation following ubiquitination being required during G2 phase to promote cell shape changes. This is Epidermal growth factor receptor kinase substrate 8 (Eps8) from Mus musculus (Mouse).